Consider the following 128-residue polypeptide: DNA polymerase epsilon subunit 3 (128 aa).

Residues 98–110 (EKKESKASKKDSN) are compositionally biased toward basic and acidic residues. The interval 98–128 (EKKESKASKKDSNTAENANASATATAEEAPE) is disordered. A compositionally biased stretch (low complexity) spans 111–128 (TAENANASATATAEEAPE).

As to quaternary structure, homodimer. Component of the DNA polymerase epsilon complex consisting of four subunits: the catalytic subunit PolE1/DNApol-epsilon255 and the accessory subunits PolE2/DNApol-epsilon58, Chrac-14/DNApolE3 and PolE4. Component of the chromatin accessibility complex (CHRAC), composed of Chrac-14, Chrac-16, Acf and Iswi. Forms an heterodimer with Chrac-16. The Chrac-14/Chrac-16 heterodimer interacts with Acf (via N-terminus). Interacts directly with Iswi and this interaction is further stabilized by association with Chrac-16. Component of the Ada2a-containing (ATAC) complex composed of at least Ada2a, Atac1, Hcf, Ada3, Gcn5, Mocs2B, Charac-14, Atac3, Atac2, NC2beta and wds. Interacts with cid.

It localises to the nucleus. Functionally, accessory component of the DNA polymerase epsilon complex. Participates in DNA repair and in chromosomal DNA replication. Histone-like protein which promotes nucleosome sliding of ATP-dependent nucleosome remodeling complexes. Part of the chromatin-accessibility complex (CHRAC) which uses energy/ATP to increase the general accessibility of DNA in chromatin. As a heterodimer with Chrac-16, binds DNA and facilitates nucleosome sliding by Acf. Has a role in DNA damage response by preventing cid mislocalization to chromatin. The polypeptide is DNA polymerase epsilon subunit 3 (Drosophila melanogaster (Fruit fly)).